Reading from the N-terminus, the 319-residue chain is Methionyl-tRNA formyltransferase (319 aa).

115–118 provides a ligand contact to (6S)-5,6,7,8-tetrahydrofolate; the sequence is SLLP.

It belongs to the Fmt family.

It catalyses the reaction L-methionyl-tRNA(fMet) + (6R)-10-formyltetrahydrofolate = N-formyl-L-methionyl-tRNA(fMet) + (6S)-5,6,7,8-tetrahydrofolate + H(+). Attaches a formyl group to the free amino group of methionyl-tRNA(fMet). The formyl group appears to play a dual role in the initiator identity of N-formylmethionyl-tRNA by promoting its recognition by IF2 and preventing the misappropriation of this tRNA by the elongation apparatus. This is Methionyl-tRNA formyltransferase from Lactococcus lactis subsp. lactis (strain IL1403) (Streptococcus lactis).